An 879-amino-acid chain; its full sequence is Alanine--tRNA ligase (879 aa).

Positions 566, 570, 668, and 672 each coordinate Zn(2+).

It belongs to the class-II aminoacyl-tRNA synthetase family. It depends on Zn(2+) as a cofactor.

The protein localises to the cytoplasm. It carries out the reaction tRNA(Ala) + L-alanine + ATP = L-alanyl-tRNA(Ala) + AMP + diphosphate. Functionally, catalyzes the attachment of alanine to tRNA(Ala) in a two-step reaction: alanine is first activated by ATP to form Ala-AMP and then transferred to the acceptor end of tRNA(Ala). Also edits incorrectly charged Ser-tRNA(Ala) and Gly-tRNA(Ala) via its editing domain. The sequence is that of Alanine--tRNA ligase from Clostridium beijerinckii (strain ATCC 51743 / NCIMB 8052) (Clostridium acetobutylicum).